Consider the following 358-residue polypeptide: Glucose 1-dehydrogenase (358 aa).

Residue C38 participates in Zn(2+) binding. T40 provides a ligand contact to substrate. 6 residues coordinate Zn(2+): H65, E66, C92, C95, C98, and C106. Residues E113, E149, and N153 each coordinate substrate. E149 is a binding site for Zn(2+). NADP(+) is bound by residues 187 to 190 (SGPI), 209 to 211 (NRR), 268 to 270 (FGT), 296 to 298 (SVN), and K342. Position 298 (N298) interacts with substrate.

The protein belongs to the zinc-containing alcohol dehydrogenase family. Glucose 1-dehydrogenase subfamily. The cofactor is Zn(2+).

The catalysed reaction is D-glucose + NAD(+) = D-glucono-1,5-lactone + NADH + H(+). It carries out the reaction D-glucose + NADP(+) = D-glucono-1,5-lactone + NADPH + H(+). Functionally, catalyzes the NAD(P)(+)-dependent oxidation of D-glucose to D-gluconate via gluconolactone. Can utilize both NAD(+) and NADP(+) as electron acceptor. Is involved in the degradation of glucose through a non-phosphorylative variant of the Entner-Doudoroff pathway. The protein is Glucose 1-dehydrogenase of Metallosphaera sedula (strain ATCC 51363 / DSM 5348 / JCM 9185 / NBRC 15509 / TH2).